Reading from the N-terminus, the 155-residue chain is UPF0260 protein NGR_c07710 (155 aa).

Belongs to the UPF0260 family.

This is UPF0260 protein NGR_c07710 from Sinorhizobium fredii (strain NBRC 101917 / NGR234).